A 260-amino-acid chain; its full sequence is Type II methyltransferase M1.MboII (260 aa).

S-adenosyl-L-methionine is bound by residues Cys12, Asp30, Lys197, Ser223–Thr225, and Asp241–Met242.

This sequence belongs to the N(4)/N(6)-methyltransferase family. At low concentration exists as a monomer and homodimer. Probably binds to DNA as a monomer.

It carries out the reaction a 2'-deoxyadenosine in DNA + S-adenosyl-L-methionine = an N(6)-methyl-2'-deoxyadenosine in DNA + S-adenosyl-L-homocysteine + H(+). Functionally, a beta subtype methylase that recognizes the double-stranded sequence 5'-GAAGA-3', methylates A-5 on the top strand, and protects the DNA from cleavage by the MboII endonuclease. It is not known if the cytosine of the complementary sequence TCTTC is also methylated by this enzyme. This Moraxella bovis protein is Type II methyltransferase M1.MboII.